The primary structure comprises 198 residues: MSMYMPGATAVGITFDGGVVFASEKRIAFGNFLVSKTTKKTFPITPKVGATCAGLVADMQILSLQIAALAKIRKMELKRDVPPNTVAKMMSNMMYERRYFPLLTQVIVGGVVDKPIMYTLDPLGSVLPDEYAAVGTGAEMALGVLDPQFKPNMTKDEAIDLAKRAVRAASLRDSASGDGVDVLVITKDGTEEFTEEIK.

Residues 1-8 (MSMYMPGA) constitute a propeptide, removed in mature form; by autocatalysis. The active-site Nucleophile is the Thr-9.

Belongs to the peptidase T1B family. As to quaternary structure, the 20S proteasome core is composed of 14 alpha and 14 beta subunits that assemble into four stacked heptameric rings, resulting in a barrel-shaped structure. The two inner rings, each composed of seven catalytic beta subunits, are sandwiched by two outer rings, each composed of seven alpha subunits. The catalytic chamber with the active sites is on the inside of the barrel. Has a gated structure, the ends of the cylinder being occluded by the N-termini of the alpha-subunits. Is capped at one or both ends by the proteasome regulatory ATPase, PAN.

It is found in the cytoplasm. The enzyme catalyses Cleavage of peptide bonds with very broad specificity.. With respect to regulation, the formation of the proteasomal ATPase PAN-20S proteasome complex, via the docking of the C-termini of PAN into the intersubunit pockets in the alpha-rings, triggers opening of the gate for substrate entry. Interconversion between the open-gate and close-gate conformations leads to a dynamic regulation of the 20S proteasome proteolysis activity. In terms of biological role, component of the proteasome core, a large protease complex with broad specificity involved in protein degradation. The polypeptide is Proteasome subunit beta 1 (Nitrosopumilus maritimus (strain SCM1)).